The primary structure comprises 744 residues: MNRTDPPITPELVASHGLKPDEYERILKLIGRVPTFTELGIFSAMWNEHCSYKSSRIHLRGLPTKAPWVIQGPGENAGVIDIGDGQAVVFKMESHNHPSYIEPYQGATTGVGGILRDVFTMGARPIACLNALSFGDPSHPKTRHLVGGVVAGVGGYGNSFGVPTVGGQVRFHTRYDGNILVNAMAVGLADADKIFYAAASGVNMPIVYLGSKTGRDGIHGATMASAEFDDDSAEKRPTVQVGDPFAEKLLLEACLEIMETDCVIAIQDMGAAGLTCSAVEMGAKGDLGVDLDLDSVPTREQGMSAYEMMLSESQERMLMVLKPEKEKEAEAIFRKWGLDFAIVGYTTPSQRFVVKHGGDVMVDLPIKELESEAPLYDRPHVPSPQLPVVHARDVAPRLPVADALEKLIATPELCSKRWVWEQYDHVIGGNTVQRPGGDAAVVRVEDGPKGLALTVDVTPRYCEADPFEGGKQAVAEAWRNITAVGGRPLAITDNLNFGNPERPEIMGQFVGCLKGIAAACTALDFPVVSGNVSLYNETNGRGILPTPSIGGVGLLDDFTQSASLAFKAEGECILLIGETQGWLGQSVYLRDVCGREEGAPPPVDLAAEKRNGDVVRGMIHAGTVTAVHDISDGGLLVALAEMAMAGGIGAALDAAPEAIVPHAWWFGEDQARYIVTVHEKDLLSVFTKLKAVEVPCVQIGLTGGHEIAIAGERAVHVKALQHGFESWLPDYMAGRVETSGIPDR.

His49 is an active-site residue. ATP-binding residues include Tyr52 and Lys91. Glu93 is a Mg(2+) binding site. Substrate is bound by residues 94 to 97 (SHNH) and Arg116. The active-site Proton acceptor is the His95. Asp117 is a Mg(2+) binding site. Gln240 serves as a coordination point for substrate. Asp268 lines the Mg(2+) pocket. Substrate is bound at residue 312–314 (ESQ). Positions 493 and 530 each coordinate ATP. Asn531 serves as a coordination point for Mg(2+). Substrate is bound at residue Ser533.

The protein belongs to the FGAMS family. In terms of assembly, monomer. Part of the FGAM synthase complex composed of 1 PurL, 1 PurQ and 2 PurS subunits.

Its subcellular location is the cytoplasm. The catalysed reaction is N(2)-formyl-N(1)-(5-phospho-beta-D-ribosyl)glycinamide + L-glutamine + ATP + H2O = 2-formamido-N(1)-(5-O-phospho-beta-D-ribosyl)acetamidine + L-glutamate + ADP + phosphate + H(+). It participates in purine metabolism; IMP biosynthesis via de novo pathway; 5-amino-1-(5-phospho-D-ribosyl)imidazole from N(2)-formyl-N(1)-(5-phospho-D-ribosyl)glycinamide: step 1/2. In terms of biological role, part of the phosphoribosylformylglycinamidine synthase complex involved in the purines biosynthetic pathway. Catalyzes the ATP-dependent conversion of formylglycinamide ribonucleotide (FGAR) and glutamine to yield formylglycinamidine ribonucleotide (FGAM) and glutamate. The FGAM synthase complex is composed of three subunits. PurQ produces an ammonia molecule by converting glutamine to glutamate. PurL transfers the ammonia molecule to FGAR to form FGAM in an ATP-dependent manner. PurS interacts with PurQ and PurL and is thought to assist in the transfer of the ammonia molecule from PurQ to PurL. In Nitrobacter hamburgensis (strain DSM 10229 / NCIMB 13809 / X14), this protein is Phosphoribosylformylglycinamidine synthase subunit PurL.